The primary structure comprises 99 residues: Acylphosphatase (99 aa).

One can recognise an Acylphosphatase-like domain in the interval 11 to 97 (ARRIHVKGKV…VVAQGFTQKP (87 aa)). Active-site residues include R26 and N44.

It belongs to the acylphosphatase family.

It catalyses the reaction an acyl phosphate + H2O = a carboxylate + phosphate + H(+). The chain is Acylphosphatase (acyP) from Rhizorhabdus wittichii (strain DSM 6014 / CCUG 31198 / JCM 15750 / NBRC 105917 / EY 4224 / RW1) (Sphingomonas wittichii).